The chain runs to 131 residues: Small ribosomal subunit protein bS18 (131 aa).

The segment covering Met1–Ala10 has biased composition (polar residues). The tract at residues Met1–Gly60 is disordered. Over residues Ser17–Arg27 the composition is skewed to gly residues. A compositionally biased stretch (basic and acidic residues) spans Gly28–Arg44.

The protein belongs to the bacterial ribosomal protein bS18 family. As to quaternary structure, part of the 30S ribosomal subunit. Forms a tight heterodimer with protein bS6.

Functionally, binds as a heterodimer with protein bS6 to the central domain of the 16S rRNA, where it helps stabilize the platform of the 30S subunit. This Myxococcus xanthus (strain DK1622) protein is Small ribosomal subunit protein bS18.